We begin with the raw amino-acid sequence, 289 residues long: Acetyl-coenzyme A carboxylase carboxyl transferase subunit beta (289 aa).

Residues 28–289 (VMTKCPECKK…QGGGMAVWQS (262 aa)) enclose the CoA carboxyltransferase N-terminal domain. Positions 32, 35, 51, and 54 each coordinate Zn(2+). A C4-type zinc finger spans residues 32–54 (CPECKKIMYTKELLKNLKVCVNC).

It belongs to the AccD/PCCB family. In terms of assembly, acetyl-CoA carboxylase is a heterohexamer composed of biotin carboxyl carrier protein (AccB), biotin carboxylase (AccC) and two subunits each of ACCase subunit alpha (AccA) and ACCase subunit beta (AccD). It depends on Zn(2+) as a cofactor.

It localises to the cytoplasm. It catalyses the reaction N(6)-carboxybiotinyl-L-lysyl-[protein] + acetyl-CoA = N(6)-biotinyl-L-lysyl-[protein] + malonyl-CoA. It functions in the pathway lipid metabolism; malonyl-CoA biosynthesis; malonyl-CoA from acetyl-CoA: step 1/1. Functionally, component of the acetyl coenzyme A carboxylase (ACC) complex. Biotin carboxylase (BC) catalyzes the carboxylation of biotin on its carrier protein (BCCP) and then the CO(2) group is transferred by the transcarboxylase to acetyl-CoA to form malonyl-CoA. This is Acetyl-coenzyme A carboxylase carboxyl transferase subunit beta from Bacillus cereus (strain G9842).